Here is a 467-residue protein sequence, read N- to C-terminus: UDP-N-acetylmuramate--L-alanine ligase (467 aa).

114-120 (GTHGKTT) provides a ligand contact to ATP.

It belongs to the MurCDEF family.

Its subcellular location is the cytoplasm. The enzyme catalyses UDP-N-acetyl-alpha-D-muramate + L-alanine + ATP = UDP-N-acetyl-alpha-D-muramoyl-L-alanine + ADP + phosphate + H(+). Its pathway is cell wall biogenesis; peptidoglycan biosynthesis. Cell wall formation. The sequence is that of UDP-N-acetylmuramate--L-alanine ligase from Rhodopseudomonas palustris (strain BisB5).